Consider the following 697-residue polypeptide: Histone-lysine N-methyltransferase SETDB2 (697 aa).

An MBD domain is found at 172 to 242 (LKKENPLNLP…DNFSFSTQVQ (71 aa)). The Pre-SET domain maps to 304–378 (KCCSCTDGCL…LCQNRVVQHG (75 aa)). C306, C308, C312, C318, C320, C359, C363, C365, and C370 together coordinate Zn(2+). The region spanning 381–672 (LRLQVFKTDT…AGTELTWDYN (292 aa)) is the SET domain. An S-adenosyl-L-methionine-binding site is contributed by 391 to 393 (KGW). 2 disordered regions span residues 438-461 (KEDNGSTSTLMLSKRKRKPSHSDS) and 529-605 (VHNS…STSP). Positions 565–581 (SGYVSEESSSSVISGGH) are enriched in low complexity. S-adenosyl-L-methionine contacts are provided by residues R626 and 629–630 (NH). Positions 632, 685, 687, and 692 each coordinate Zn(2+).

This sequence belongs to the class V-like SAM-binding methyltransferase superfamily.

It localises to the nucleus. It is found in the chromosome. It catalyses the reaction N(6),N(6)-dimethyl-L-lysyl(9)-[histone H3] + S-adenosyl-L-methionine = N(6),N(6),N(6)-trimethyl-L-lysyl(9)-[histone H3] + S-adenosyl-L-homocysteine + H(+). Histone methyltransferase involved in left-right axis specification in early development and mitosis. Specifically trimethylates 'Lys-9' of histone H3 (H3K9me3). H3K9me3 represents a specific tag for epigenetic transcriptional repression by recruiting HP1 (CBX1, CBX3 and/or CBX5) proteins to methylated histones. Contributes to H3K9me3 in both the interspersed repetitive elements and centromere-associated repeats. Plays a role in chromosome condensation and segregation during mitosis. This chain is Histone-lysine N-methyltransferase SETDB2 (setdb2), found in Xenopus tropicalis (Western clawed frog).